A 179-amino-acid polypeptide reads, in one-letter code: NADH-quinone oxidoreductase subunit B (179 aa).

[4Fe-4S] cluster is bound by residues cysteine 53, cysteine 54, cysteine 118, and cysteine 148.

It belongs to the complex I 20 kDa subunit family. In terms of assembly, NDH-1 is composed of 14 different subunits. Subunits NuoB, C, D, E, F, and G constitute the peripheral sector of the complex. Requires [4Fe-4S] cluster as cofactor.

The protein resides in the cell membrane. The enzyme catalyses a quinone + NADH + 5 H(+)(in) = a quinol + NAD(+) + 4 H(+)(out). In terms of biological role, NDH-1 shuttles electrons from NADH, via FMN and iron-sulfur (Fe-S) centers, to quinones in the respiratory chain. The immediate electron acceptor for the enzyme in this species is believed to be a menaquinone. Couples the redox reaction to proton translocation (for every two electrons transferred, four hydrogen ions are translocated across the cytoplasmic membrane), and thus conserves the redox energy in a proton gradient. This chain is NADH-quinone oxidoreductase subunit B, found in Bacillus thuringiensis (strain Al Hakam).